The sequence spans 72 residues: Tetrahydromethanopterin S-methyltransferase subunit G (72 aa).

A helical transmembrane segment spans residues 48 to 68 (IGILYGGFIGLLLFLIYTVVS).

The protein belongs to the MtrG family. The complex is composed of 8 subunits; MtrA, MtrB, MtrC, MtrD, MtrE, MtrF, MtrG and MtrH.

It localises to the cell membrane. It carries out the reaction 5-methyl-5,6,7,8-tetrahydromethanopterin + coenzyme M + 2 Na(+)(in) = 5,6,7,8-tetrahydromethanopterin + methyl-coenzyme M + 2 Na(+)(out). It functions in the pathway one-carbon metabolism; methanogenesis from CO(2); methyl-coenzyme M from 5,10-methylene-5,6,7,8-tetrahydromethanopterin: step 2/2. Functionally, part of a complex that catalyzes the formation of methyl-coenzyme M and tetrahydromethanopterin from coenzyme M and methyl-tetrahydromethanopterin. This is an energy-conserving, sodium-ion translocating step. This Methanosarcina barkeri (strain Fusaro / DSM 804) protein is Tetrahydromethanopterin S-methyltransferase subunit G.